A 205-amino-acid polypeptide reads, in one-letter code: MSAIAPGMILFAYLCGSISSAILVCRIAGLPDPRESGSGNPGATNVLRIGGKGAAVAVLIFDILKGMLPVWGAYALGITPFWLGLIAIAACLGHIWPVFFGFKGGKGVATAFGAIAPIGWDLTGVIAGTWLLTVLLSGYSSLGAIVSALIAPFYVWWFKPQFTFPVSMLSCLILLRHHDNIQRLWRRQETKIWTKLKKKREKESK.

Residues 1-3 (MSA) are Periplasmic-facing. A helical membrane pass occupies residues 4-24 (IAPGMILFAYLCGSISSAILV). At 25–52 (CRIAGLPDPRESGSGNPGATNVLRIGGK) the chain is on the cytoplasmic side. A helical transmembrane segment spans residues 53-73 (GAAVAVLIFDILKGMLPVWGA). Residues 74 to 80 (YALGITP) are Periplasmic-facing. Residues 81-101 (FWLGLIAIAACLGHIWPVFFG) traverse the membrane as a helical segment. The Cytoplasmic segment spans residues 102-111 (FKGGKGVATA). The helical transmembrane segment at 112–132 (FGAIAPIGWDLTGVIAGTWLL) threads the bilayer. The Periplasmic segment spans residues 133 to 137 (TVLLS). Residues 138-158 (GYSSLGAIVSALIAPFYVWWF) form a helical membrane-spanning segment. At 159–205 (KPQFTFPVSMLSCLILLRHHDNIQRLWRRQETKIWTKLKKKREKESK) the chain is on the cytoplasmic side.

Belongs to the PlsY family. As to quaternary structure, probably interacts with PlsX.

Its subcellular location is the cell inner membrane. The enzyme catalyses sn-glycerol 3-phosphate + an acyl-CoA = a 1-acyl-sn-glycero-3-phosphate + CoA. It carries out the reaction a fatty acyl-[ACP] + sn-glycerol 3-phosphate = a 1-acyl-sn-glycero-3-phosphate + holo-[ACP]. It participates in lipid metabolism; phospholipid metabolism. Functionally, catalyzes the transfer of an acyl group from acyl-ACP to glycerol-3-phosphate (G3P) to form lysophosphatidic acid (LPA). This enzyme can also utilize acyl-CoA as fatty acyl donor, but not acyl-PO(4). The sequence is that of Glycerol-3-phosphate acyltransferase from Salmonella arizonae (strain ATCC BAA-731 / CDC346-86 / RSK2980).